Reading from the N-terminus, the 147-residue chain is Myoglobin (147 aa).

Ala2 bears the N-acetylalanine mark. Residues 2–141 (ADFDAVLKCW…IIADLEANYK (140 aa)) enclose the Globin domain. His60 is a nitrite binding site. His60 is an O2 binding site. His89 lines the heme b pocket.

This sequence belongs to the globin family. In terms of assembly, monomeric.

The protein resides in the cytoplasm. The protein localises to the sarcoplasm. The catalysed reaction is Fe(III)-heme b-[protein] + nitric oxide + H2O = Fe(II)-heme b-[protein] + nitrite + 2 H(+). It carries out the reaction H2O2 + AH2 = A + 2 H2O. Functionally, monomeric heme protein which primary function is to store oxygen and facilitate its diffusion within muscle tissues. Reversibly binds oxygen through a pentacoordinated heme iron and enables its timely and efficient release as needed during periods of heightened demand. Depending on the oxidative conditions of tissues and cells, and in addition to its ability to bind oxygen, it also has a nitrite reductase activity whereby it regulates the production of bioactive nitric oxide. Under stress conditions, like hypoxia and anoxia, it also protects cells against reactive oxygen species thanks to its pseudoperoxidase activity. The protein is Myoglobin (mb) of Thunnus albacares (Yellowfin tuna).